Reading from the N-terminus, the 156-residue chain is ATP synthase subunit b (156 aa).

The chain crosses the membrane as a helical span at residues 5–25 (LTLIGQAIAFAFFVAFCMKFV).

The protein belongs to the ATPase B chain family. In terms of assembly, F-type ATPases have 2 components, F(1) - the catalytic core - and F(0) - the membrane proton channel. F(1) has five subunits: alpha(3), beta(3), gamma(1), delta(1), epsilon(1). F(0) has three main subunits: a(1), b(2) and c(10-14). The alpha and beta chains form an alternating ring which encloses part of the gamma chain. F(1) is attached to F(0) by a central stalk formed by the gamma and epsilon chains, while a peripheral stalk is formed by the delta and b chains.

Its subcellular location is the cell inner membrane. Functionally, f(1)F(0) ATP synthase produces ATP from ADP in the presence of a proton or sodium gradient. F-type ATPases consist of two structural domains, F(1) containing the extramembraneous catalytic core and F(0) containing the membrane proton channel, linked together by a central stalk and a peripheral stalk. During catalysis, ATP synthesis in the catalytic domain of F(1) is coupled via a rotary mechanism of the central stalk subunits to proton translocation. Component of the F(0) channel, it forms part of the peripheral stalk, linking F(1) to F(0). This is ATP synthase subunit b from Acinetobacter baumannii (strain SDF).